Reading from the N-terminus, the 301-residue chain is 5'-3' exonuclease (301 aa).

The region spanning 182 to 264 (GYADLALLRG…RVAADVPLPD (83 aa)) is the 5'-3' exonuclease domain.

Its function is as follows. 5'-3' exonuclease acting preferentially on double-stranded DNA. The chain is 5'-3' exonuclease from Streptomyces coelicolor (strain ATCC BAA-471 / A3(2) / M145).